Reading from the N-terminus, the 431-residue chain is Enolase (431 aa).

Glutamine 163 serves as a coordination point for (2R)-2-phosphoglycerate. The Proton donor role is filled by glutamate 205. Aspartate 242, glutamate 288, and aspartate 315 together coordinate Mg(2+). 4 residues coordinate (2R)-2-phosphoglycerate: lysine 340, arginine 369, serine 370, and lysine 391. Catalysis depends on lysine 340, which acts as the Proton acceptor.

It belongs to the enolase family. It depends on Mg(2+) as a cofactor.

It localises to the cytoplasm. Its subcellular location is the secreted. The protein localises to the cell surface. The catalysed reaction is (2R)-2-phosphoglycerate = phosphoenolpyruvate + H2O. Its pathway is carbohydrate degradation; glycolysis; pyruvate from D-glyceraldehyde 3-phosphate: step 4/5. Its function is as follows. Catalyzes the reversible conversion of 2-phosphoglycerate (2-PG) into phosphoenolpyruvate (PEP). It is essential for the degradation of carbohydrates via glycolysis. This chain is Enolase, found in Bacillus mycoides (strain KBAB4) (Bacillus weihenstephanensis).